Reading from the N-terminus, the 534-residue chain is Probable alkaline/neutral invertase D (534 aa).

Phosphoserine is present on residues S7 and S37. T55 is modified (phosphothreonine). S532 is subject to Phosphoserine.

It belongs to the glycosyl hydrolase 100 family.

The catalysed reaction is Hydrolysis of terminal non-reducing beta-D-fructofuranoside residues in beta-D-fructofuranosides.. In terms of biological role, invertase that cleaves sucrose into glucose and fructose. The chain is Probable alkaline/neutral invertase D from Arabidopsis thaliana (Mouse-ear cress).